The chain runs to 776 residues: Systemic RNA interference defective protein 1 (776 aa).

The first 17 residues, 1–17 (MIRVYLIILMHLVIGLT), serve as a signal peptide directing secretion. At 18 to 319 (QNNSTTPSPI…ENQSYAVPTA (302 aa)) the chain is on the extracellular side. N-linked (GlcNAc...) asparagine glycosylation is found at asparagine 19, asparagine 20, asparagine 32, asparagine 205, asparagine 210, asparagine 234, asparagine 290, and asparagine 311. Residues 22–312 (TTPSPIITSS…SFEFKKLENQ (291 aa)) form an involved in dsRNA-binding region. The helical transmembrane segment at 320 to 340 (LMMIFLTTPCLLFLPIVINII) threads the bilayer. The Cytoplasmic segment spans residues 341 to 429 (KNSRKLAPSQ…KQDSLSLHGQ (89 aa)). Positions 360–390 (PSEQRDMDLSHDEQQNTSSELENNGEIPAAE) are disordered. Positions 362–373 (EQRDMDLSHDEQ) are enriched in basic and acidic residues. Residues 430-450 (MLQYPVAIILPVLMHTAIEFH) form a helical membrane-spanning segment. Over 451 to 481 (KWTTSTMANRDEMCFHNHACARPLGELRAWN) the chain is Extracellular. The chain crosses the membrane as a helical span at residues 482–502 (NIITNIGYTLYGAIFIVLSIC). Residues 503-510 (RRGRHEYS) are Cytoplasmic-facing. A helical transmembrane segment spans residues 511-531 (HVFGTYECTLLDVTIGVFMVL). The Extracellular portion of the chain corresponds to 532-543 (QSIASATYHICP). The chain crosses the membrane as a helical span at residues 544–564 (SDVAFQFDTPCIQVICGLLMV). The Cytoplasmic portion of the chain corresponds to 565 to 575 (RQWFVRHESPS). Residues 576 to 596 (PAYTNILLVGVVSLNFLISAF) traverse the membrane as a helical segment. Topologically, residues 597 to 599 (SKT) are extracellular. The chain crosses the membrane as a helical span at residues 600-620 (SYVRFIIAVIHVIVVGSICLA). Residues 621-633 (KERSLGSEKLKTR) lie on the Cytoplasmic side of the membrane. Residues 634-654 (FFIMAFSMGNFAAIVMYLTLS) traverse the membrane as a helical segment. Residues 655-659 (AFHLN) are Extracellular-facing. The helical transmembrane segment at 660–680 (QIATYCFIINCIMYLMYYGCM) threads the bilayer. Topologically, residues 681–691 (KVLHSERITSK) are cytoplasmic. The chain crosses the membrane as a helical span at residues 692–712 (AKLCGALSLLAWAVAGFFFFQ). Residues 713-741 (DDTDWTRSAAASRALNKPCLLLGFFGSHD) are Extracellular-facing. The chain crosses the membrane as a helical span at residues 742–762 (LWHIFGALAGLFTFIFVSFVD). The Cytoplasmic segment spans residues 763 to 776 (DDLINTRKTSINIF).

This sequence belongs to the SID1 family. May self-associate to form multimers. In terms of tissue distribution, expressed in most non-neuronal cells, including body wall muscle cells.

The protein localises to the cell membrane. Plays a role in RNA-mediated gene silencing by acting cell-autonomously as a channel for the transport of double-stranded RNA (dsRNA) between cells. Mediates the spread of dsRNA and subsequent silencing of genes in cells distant from the site of dsRNA introduction. Selective for dsRNA. Preferentially binds long dsRNA, from 50 base pairs up to 700. Short 20 base-pair long molecules are not bound. May also bind dsDNA, but with lower affinity. Binding may be sequence-independent. Required for avoidance behavior induced by small RNAs derived from pathogenic bacteria such as P.aeruginosa. The chain is Systemic RNA interference defective protein 1 from Caenorhabditis elegans.